The primary structure comprises 233 residues: Aspartate/glutamate leucyltransferase (233 aa).

This sequence belongs to the R-transferase family. Bpt subfamily.

The protein localises to the cytoplasm. It carries out the reaction N-terminal L-glutamyl-[protein] + L-leucyl-tRNA(Leu) = N-terminal L-leucyl-L-glutamyl-[protein] + tRNA(Leu) + H(+). The catalysed reaction is N-terminal L-aspartyl-[protein] + L-leucyl-tRNA(Leu) = N-terminal L-leucyl-L-aspartyl-[protein] + tRNA(Leu) + H(+). In terms of biological role, functions in the N-end rule pathway of protein degradation where it conjugates Leu from its aminoacyl-tRNA to the N-termini of proteins containing an N-terminal aspartate or glutamate. The chain is Aspartate/glutamate leucyltransferase from Vibrio campbellii (strain ATCC BAA-1116).